We begin with the raw amino-acid sequence, 211 residues long: Protein-methionine-sulfoxide reductase heme-binding subunit MsrQ (211 aa).

A run of 5 helical transmembrane segments spans residues 45–65, 82–102, 116–136, 153–173, and 178–198; these read HFTGLTALKFLLAALLITPLA, LWCFAWATLHLTSYALLELGV, PYLTLGIISWVILLALAFTST, FVYLVAILAPIHYLWSVKIIS, and IYAGLAVLLLALRYKKLLSLF.

The protein belongs to the MsrQ family. In terms of assembly, heterodimer of a catalytic subunit (MsrP) and a heme-binding subunit (MsrQ). The cofactor is FMN. Heme b is required as a cofactor.

Its subcellular location is the cell inner membrane. Functionally, part of the MsrPQ system that repairs oxidized periplasmic proteins containing methionine sulfoxide residues (Met-O), using respiratory chain electrons. Thus protects these proteins from oxidative-stress damage caused by reactive species of oxygen and chlorine generated by the host defense mechanisms. MsrPQ is essential for the maintenance of envelope integrity under bleach stress, rescuing a wide series of structurally unrelated periplasmic proteins from methionine oxidation, including the primary periplasmic chaperone SurA and the lipoprotein Pal. MsrQ provides electrons for reduction to the reductase catalytic subunit MsrP, using the quinone pool of the respiratory chain. This is Protein-methionine-sulfoxide reductase heme-binding subunit MsrQ from Escherichia coli O127:H6 (strain E2348/69 / EPEC).